Consider the following 727-residue polypeptide: Centrosomal protein kizuna (727 aa).

A disordered region spans residues 1 to 20 (MTERSGRGGGTRGASALPSP). A coiled-coil region spans residues 77–124 (KNARIRNQEYLKQFERIQANITASLEKLQELKIEFETQIKKMQLLSKD). Disordered regions lie at residues 176-226 (DFTT…NKSD), 271-456 (EGKK…FTNL), and 564-727 (RLAV…PRTP). Residues 198–223 (HQQTAQSSDVTGSRVVQTPGDTQCLN) show a composition bias toward polar residues. The segment covering 286 to 324 (LSPENRTTDLKCDSSRRSEGSEGEILTREHIEVEEERAR) has biased composition (basic and acidic residues). Ser328 is subject to Phosphoserine. Over residues 343-359 (PQEKPPARKASSDHLPC) the composition is skewed to basic and acidic residues. A compositionally biased stretch (low complexity) spans 380-390 (LSSSSDLTVSV). Residue Thr387 is modified to Phosphothreonine; by PLK1. Over residues 442–455 (APSTPDSPNESFTN) the composition is skewed to polar residues. Positions 569 to 583 (SSKSSCSLPSTPSDE) are enriched in low complexity. Acidic residues predominate over residues 603 to 613 (QEDESREESTE). Residues 631 to 642 (LKQSALQGSTHQ) are compositionally biased toward polar residues. Composition is skewed to low complexity over residues 659–669 (GLKTGSGTFKT) and 677–689 (SEASFSSSEGSPL). A phosphoserine mark is found at Ser711, Ser714, and Ser716.

This sequence belongs to the kizuna family. In terms of assembly, interacts with AKAP9, CEP72, ODF2, PCNT and TUBGCP2. Phosphorylation at Thr-387 by PLK1 is not needed for centrosomal localization or pericentriolar material expansion but is indispensable for spindle-pole stabilization.

The protein localises to the cytoplasm. It localises to the cytoskeleton. Its subcellular location is the microtubule organizing center. It is found in the centrosome. The protein resides in the cilium basal body. Its function is as follows. Centrosomal protein required for establishing a robust mitotic centrosome architecture that can endure the forces that converge on the centrosomes during spindle formation. Required for stabilizing the expanded pericentriolar material around the centriole. The polypeptide is Centrosomal protein kizuna (KIZ) (Bos taurus (Bovine)).